The sequence spans 157 residues: Putative pre-16S rRNA nuclease (157 aa).

It belongs to the YqgF nuclease family.

The protein localises to the cytoplasm. Its function is as follows. Could be a nuclease involved in processing of the 5'-end of pre-16S rRNA. This Nitrosomonas eutropha (strain DSM 101675 / C91 / Nm57) protein is Putative pre-16S rRNA nuclease.